The following is a 518-amino-acid chain: D-aminopeptidase (518 aa).

Ser62 functions as the Nucleophile in the catalytic mechanism. The active-site Proton donor/acceptor is the Lys65. The interval 477–487 is important for specificity; sequence QRSMDAPSPGE. Residue Asp481 coordinates substrate.

This sequence belongs to the peptidase S12 family. As to quaternary structure, homodimer.

The catalysed reaction is Release of an N-terminal D-amino acid from a peptide, Xaa-|-Yaa-, in which Xaa is preferably D-Ala, D-Ser or D-Thr. D-amino acid amides and methyl esters also are hydrolyzed, as is glycine amide.. Its activity is regulated as follows. Inhibited by beta-lactam compounds such as 6-aminopenicillic acid, 7-aminocephalosporanic acid, benzylpenicillin and ampicillin. Inhibited by p-chloromercuribenzoate. Hydrolyzes N-terminal residues in D-amino acid-containing peptides. The protein is D-aminopeptidase of Brucella abortus (strain S19).